Consider the following 215-residue polypeptide: MKIFIDTANVEEIRKASKLGVLAGVTTNPSLIAKEGRDIKEVIEEICSIVDGPISAEVMALECDEMVREGRELAKIHKNIVIKIPMCEEGLKAVKVLASEGIRTNVTLIFSPLQALLAARAGASFVSPFLGRLDDIGNPGIEIVTQIAEMFALHGIDTEIISASVRNPMHVLDSAMAGSHIATIPYNVILQMVKHPLTDAGMKKFIEDYNKAFNK.

The active-site Schiff-base intermediate with substrate is the Lys83.

This sequence belongs to the transaldolase family. Type 3B subfamily.

It is found in the cytoplasm. The catalysed reaction is D-sedoheptulose 7-phosphate + D-glyceraldehyde 3-phosphate = D-erythrose 4-phosphate + beta-D-fructose 6-phosphate. It participates in carbohydrate degradation; pentose phosphate pathway; D-glyceraldehyde 3-phosphate and beta-D-fructose 6-phosphate from D-ribose 5-phosphate and D-xylulose 5-phosphate (non-oxidative stage): step 2/3. Functionally, transaldolase is important for the balance of metabolites in the pentose-phosphate pathway. This is Probable transaldolase from Clostridium perfringens (strain 13 / Type A).